A 372-amino-acid polypeptide reads, in one-letter code: Cytochrome b (372 aa).

4 helical membrane-spanning segments follow: residues 32 to 52 (LGFN…CLSW), 77 to 99 (FIIR…IHII), 114 to 134 (VWFF…IGYT), and 180 to 200 (LHSI…AHFF). The heme b site is built by His83 and His97. 2 residues coordinate heme b: His184 and His198. Residue His203 coordinates a ubiquinone. 4 helical membrane-spanning segments follow: residues 228–248 (YYLR…YYIC), 297–317 (LLFV…LIFI), 330–350 (LVLF…VLCF), and 351–371 (PLWM…VCRL).

It belongs to the cytochrome b family. The main subunits of complex b-c1 are: cytochrome b, cytochrome c1 and the Rieske protein. Requires heme b as cofactor.

The protein localises to the mitochondrion inner membrane. In terms of biological role, component of the ubiquinol-cytochrome c reductase complex (complex III or cytochrome b-c1 complex) that is part of the mitochondrial respiratory chain. The b-c1 complex mediates electron transfer from ubiquinol to cytochrome c. Contributes to the generation of a proton gradient across the mitochondrial membrane that is then used for ATP synthesis. The protein is Cytochrome b (MT-CYB) of Trypanoplasma borreli.